The chain runs to 349 residues: MKLKKMNLPYISNTYDVRKIMFLVVLSCIPGLCTEIYFFGCGVLIQTLLFVIISLLFEIIILKMRRKNIKNSLFDYSSFLTAVLLGLSTPCALPWWMIIFSCFFAIVISKYLYGGLGQNIFNPAMIGYVVLLISFPVHMTAWNEKNSSLSFYNDIKKSINLILFYNKLNNSKKKICPDNFTEATPLDDFKTKSHFDYDFFPEESAVKKKTKIVSIAWKYINISFLIGGCFLLYKKVICWRIPLSFLSSLIFFSSITYFYSQKFFCSPLFHLFSGGTMMCAFFIATDPVTTSCTKIGKIFFGLIIGFLVWIIRNYSDYPDGIAFSVLFANMIVPLMDAYLKTSGYGHKNL.

4 consecutive transmembrane segments (helical) span residues 20-40, 42-62, 83-105, and 120-140; these read IMFLVVLSCIPGLCTEIYFFG, GVLIQTLLFVIISLLFEIIIL, VLLGLSTPCALPWWMIIFSCFFA, and IFNPAMIGYVVLLISFPVHMT. Threonine 184 is modified (FMN phosphoryl threonine). The next 5 membrane-spanning stretches (helical) occupy residues 212 to 232, 236 to 256, 263 to 283, 291 to 311, and 319 to 339; these read IVSIAWKYINISFLIGGCFLL, VICWRIPLSFLSSLIFFSSIT, FFCSPLFHLFSGGTMMCAFFI, SCTKIGKIFFGLIIGFLVWII, and DGIAFSVLFANMIVPLMDAYL.

This sequence belongs to the NqrB/RnfD family. The complex is composed of six subunits: RnfA, RnfB, RnfC, RnfD, RnfE and RnfG. FMN serves as cofactor.

The protein localises to the cell inner membrane. Its function is as follows. Part of a membrane-bound complex that couples electron transfer with translocation of ions across the membrane. This chain is Ion-translocating oxidoreductase complex subunit D, found in Buchnera aphidicola subsp. Schizaphis graminum (strain Sg).